Consider the following 279-residue polypeptide: MGQKISGGVKTVSRNDSQSTFKPIIPRELQADFVKPARIDILLDMPPASRDLQLKHSWNSEDRSLNIFVKEDDKLTFHRHPVAQSTDCIRGKVGLTKGLHIWEIYWPTRQRGTHAVVGVCTADAPLHSVGYQSLVGSTEQSWGWDLGRNKLYHDSKNCAGVTYPAILKNDEAFLVPDKFLVALDMDEGTLSFIVDQQYLGIAFRGLRGKKLYPIVSAVWGHCEITMRYIGGLDPEPLPLMDLCRRTIRQKIGRTNLEEHIQQLQLPLSMKTYLLYKNRR.

Positions Pro-36 to Asp-233 constitute a B30.2/SPRY domain. An SOCS box domain is found at Pro-234 to Arg-279. An involved in binding to the Elongin BC complex region spans residues Pro-236 to Arg-279.

It belongs to the SPSB family. In terms of assembly, interacts (via B30.2/SPRY domain) with vas; this interaction may be necessary for the transport of vas to the posterior pole of the oocyte. Interacts with Cul-5. May associate with the Elongin BC complex composed of Elongin-B and Elongin-C. As to expression, expressed in ovaries, primarily in nurse cells and oocytes (at protein level).

The protein resides in the cytoplasm. Its subcellular location is the nucleus. In terms of biological role, involved in the localization of vas to the posterior pole of the oocyte. Required maternally in the germ line for efficient primordial germ cell formation. This Drosophila melanogaster (Fruit fly) protein is Protein gustavus (gus).